We begin with the raw amino-acid sequence, 550 residues long: Metal transporter Nramp4 (550 aa).

Basic and acidic residues predominate over residues 1–13 (MEEGAKIGREHEQ). The interval 1–37 (MEEGAKIGREHEQQQQQHGRVNGSGRVAAVGGGSGGG) is disordered. Residues 14-29 (QQQQHGRVNGSGRVAA) show a composition bias toward low complexity. A run of 12 helical transmembrane segments spans residues 72–92 (FLAH…PSNL), 105–125 (SLLW…SLAA), 151–171 (LWLL…LGTA), 177–197 (LLHI…FLIL), 207–227 (MEFT…MELG), 255–275 (VAMF…SLVL), 292–312 (FFLL…VAIV), 354–374 (VYGV…SYAG), 388–408 (IIYL…CSIG), 416–436 (IINI…IPLI), 457–477 (IAWI…CTSF), and 492–512 (AIIS…LIYL).

This sequence belongs to the NRAMP (TC 2.A.55) family.

It localises to the membrane. Probable metal transporter. This chain is Metal transporter Nramp4 (NRAMP4), found in Oryza sativa subsp. japonica (Rice).